The following is a 391-amino-acid chain: Serine acetyltransferase 3, mitochondrial (391 aa).

Disordered regions lie at residues 40–82 (KHHT…HDDE) and 353–375 (VGNP…IPGL). Pro residues predominate over residues 45-56 (SPPPSPPPPPPM).

Belongs to the transferase hexapeptide repeat family. In terms of assembly, homomultimer. Interacts with OASC. Component of the cysteine synthase complex (CSC) composed of two OAS-TL dimers and one SAT hexamer. Ubiquitous with higher levels in leaves and siliques. Localized in vascular tissues, particularly in phloem.

Its subcellular location is the mitochondrion. The catalysed reaction is L-serine + acetyl-CoA = O-acetyl-L-serine + CoA. It participates in amino-acid biosynthesis; L-cysteine biosynthesis; L-cysteine from L-serine: step 1/2. The protein is Serine acetyltransferase 3, mitochondrial (SAT3) of Arabidopsis thaliana (Mouse-ear cress).